The primary structure comprises 122 residues: Big defensin (122 aa).

Residues 1 to 28 (MTRPSLVRCYSLFFTALIVMAIICPAWS) form the signal peptide. A propeptide spanning residues 29-34 (EEIPKS) is cleaved from the precursor. 3 disulfides stabilise this stretch: cysteine 88-cysteine 119, cysteine 95-cysteine 114, and cysteine 99-cysteine 120.

It belongs to the big defensin family. In terms of tissue distribution, expressed in hemocytes.

The protein resides in the secreted. Its function is as follows. Significantly inhibits the growth of Gram-negative and Gram-positive bacteria and fungi in vitro. The chain is Big defensin from Argopecten irradians (Bay scallop).